The sequence spans 303 residues: Recombination-associated protein RdgC (303 aa).

It belongs to the RdgC family.

Its subcellular location is the cytoplasm. The protein localises to the nucleoid. Functionally, may be involved in recombination. The polypeptide is Recombination-associated protein RdgC (Pseudoalteromonas translucida (strain TAC 125)).